Consider the following 82-residue polypeptide: uncharacterized protein (82 aa).

An N-terminal signal peptide occupies residues 1–19 (MKNLLKILLIIAFANPVFA).

This is an uncharacterized protein from Rickettsia prowazekii (strain Madrid E).